We begin with the raw amino-acid sequence, 363 residues long: Ribosomal RNA large subunit methyltransferase M (363 aa).

S-adenosyl-L-methionine contacts are provided by residues Ser194, 227–230, Asp246, Asp266, and Asp284; that span reads CPGG. The Proton acceptor role is filled by Lys313.

It belongs to the class I-like SAM-binding methyltransferase superfamily. RNA methyltransferase RlmE family. RlmM subfamily. In terms of assembly, monomer.

It is found in the cytoplasm. It carries out the reaction cytidine(2498) in 23S rRNA + S-adenosyl-L-methionine = 2'-O-methylcytidine(2498) in 23S rRNA + S-adenosyl-L-homocysteine + H(+). Catalyzes the 2'-O-methylation at nucleotide C2498 in 23S rRNA. The chain is Ribosomal RNA large subunit methyltransferase M from Haemophilus influenzae (strain 86-028NP).